Reading from the N-terminus, the 206-residue chain is Ribosomal RNA small subunit methyltransferase G (206 aa).

S-adenosyl-L-methionine is bound by residues glycine 73, leucine 78, 124–125, and arginine 139; that span reads VE.

The protein belongs to the methyltransferase superfamily. RNA methyltransferase RsmG family.

The protein localises to the cytoplasm. The enzyme catalyses guanosine(527) in 16S rRNA + S-adenosyl-L-methionine = N(7)-methylguanosine(527) in 16S rRNA + S-adenosyl-L-homocysteine. Specifically methylates the N7 position of guanine in position 527 of 16S rRNA. This is Ribosomal RNA small subunit methyltransferase G from Edwardsiella ictaluri (strain 93-146).